We begin with the raw amino-acid sequence, 177 residues long: MLDAFSKVITSADGKAAYVGGADLQALKKFVSDGNKRMDAVNAIVSNASCIVSDAVSGMVCENPALIAPNGGVYSNRKMAACLRDAEIILRYVSYSLLSGDSSVLEDRCLNGLKETYASLGVPAAGNARAVAIMKATVNGFINNTAQQKKLSTPAGDCSALASEAGGYFDKVSSALA.

Residues tyrosine 18, lysine 28, asparagine 35, and aspartate 39 each contribute to the (2R,3E)-phycocyanobilin site. The 15,16-dihydrobiliverdin site is built by cysteine 50, aspartate 54, and cysteine 61. Arginine 77, cysteine 82, arginine 84, and aspartate 85 together coordinate (2R,3E)-phycocyanobilin. 15,16-dihydrobiliverdin contacts are provided by arginine 129, glutamine 148, and lysine 149. Residues proline 154, glycine 156, and cysteine 158 each coordinate (2R,3E)-phycocyanobilin.

This sequence belongs to the phycobiliprotein family. In terms of assembly, heterotetramer of 2 identical alpha chains and 2 identical beta chains which form 2 alpha-beta heterodimers within the heterotetramer. The two alpha-beta heterodimers are rotated to an open configuration in contrast to the closed configuration found in other cryptophyte species due to the insertion of a single amino acid, 'Asp-65', in a conserved region of the alpha chain. In the open form, the central chromophores are not in physical contact but are separated by a water-filled channel. In terms of processing, contains three phycocyanobilin chromophores and one 15,16-dihydrobiliverdin chromophore with binding of the phycocyanobilin chromophores mediated by both the alpha and beta subunits.

It is found in the plastid. The protein localises to the chloroplast thylakoid membrane. Functionally, light-harvesting photosynthetic bile pigment-protein from the phycobiliprotein complex. This is Phycoerythrin beta subunit from Hemiselmis virescens.